The sequence spans 409 residues: Putative competence-damage inducible protein (409 aa).

It belongs to the CinA family.

In Clostridium botulinum (strain ATCC 19397 / Type A), this protein is Putative competence-damage inducible protein.